The chain runs to 260 residues: MNKFLIIDGLNLVRRIYAAIPDENDMDSLTERVSVACTKLLRIHHPTHVTIVWDGDEMSWRKQLYPDYKKGRKPMPEPLAAGLPALQEHLKSVQIQSIYAAAEADDVIATLAMKTAKAQGEAVIVSTDKGFSQLNHPRISQWDHFNQQYLNITELEQKLGVDRSQFLDLLALAGDSGNKIPGIAGIGPKSAAELLRTFRTLAALFSSLPNLGAKQAKKLAEGRDMARLSYKLAQLQIDLPLNINLKDFRVNGPATTPQLD.

Residue D105 participates in Mg(2+) binding. In terms of domain architecture, 5'-3' exonuclease spans 164–254 (SQFLDLLALA…LKDFRVNGPA (91 aa)). K(+) contacts are provided by L172, A173, P181, I183, and I186. The interaction with DNA stretch occupies residues 185 to 190 (GIGPKS).

This sequence belongs to the Xni family. The cofactor is Mg(2+). It depends on K(+) as a cofactor.

Functionally, has flap endonuclease activity. During DNA replication, flap endonucleases cleave the 5'-overhanging flap structure that is generated by displacement synthesis when DNA polymerase encounters the 5'-end of a downstream Okazaki fragment. The sequence is that of Flap endonuclease Xni from Shewanella sp. (strain ANA-3).